Consider the following 326-residue polypeptide: Phospho-N-acetylmuramoyl-pentapeptide-transferase (326 aa).

The next 9 helical transmembrane spans lie at 3 to 23 (ISISAGIVTFLLTLVEIPAFI), 51 to 71 (TMGGLVFLITSVLVAFFFALF), 79 to 99 (VGMILFILVLYGLVGFLDDFL), 115 to 135 (LALQLLGGVIFYLFYERGGDI), 138 to 158 (VFGYPVHLGFFYIFFALFWLV), 169 to 189 (GVDGLASISVVISLSAYGVIA), 195 to 215 (MDILLVILAMIGGLLGFFIFN), 221 to 243 (VFMGDVGSLALGGMLAAISMALH), and 306 to 326 (FFFWGVGLLASLLTLAILYLM).

The protein belongs to the glycosyltransferase 4 family. MraY subfamily. Requires Mg(2+) as cofactor.

Its subcellular location is the cell membrane. It catalyses the reaction UDP-N-acetyl-alpha-D-muramoyl-L-alanyl-gamma-D-glutamyl-L-lysyl-D-alanyl-D-alanine + di-trans,octa-cis-undecaprenyl phosphate = Mur2Ac(oyl-L-Ala-gamma-D-Glu-L-Lys-D-Ala-D-Ala)-di-trans,octa-cis-undecaprenyl diphosphate + UMP. It functions in the pathway cell wall biogenesis; peptidoglycan biosynthesis. Catalyzes the initial step of the lipid cycle reactions in the biosynthesis of the cell wall peptidoglycan: transfers peptidoglycan precursor phospho-MurNAc-pentapeptide from UDP-MurNAc-pentapeptide onto the lipid carrier undecaprenyl phosphate, yielding undecaprenyl-pyrophosphoryl-MurNAc-pentapeptide, known as lipid I. This is Phospho-N-acetylmuramoyl-pentapeptide-transferase from Streptococcus pneumoniae (strain 70585).